Consider the following 418-residue polypeptide: MAP kinase-interacting serine/threonine-protein kinase 1 (418 aa).

Residues 1–23 form a disordered region; it reads MVSSQPVPFDDGGKRRKKKRKTR. Residues 37–321 form the Protein kinase domain; that stretch reads RLTDELLGEG…AFQVLQHPWL (285 aa). ATP contacts are provided by residues 43 to 51 and lysine 66; that span reads LGEGAYAKV. Aspartate 158 acts as the Proton acceptor in catalysis. Residues 384–418 are disordered; it reads PPSKSRLAKRRAQAHARKGGSHPTHSTVTASQGTP. A compositionally biased stretch (basic residues) spans 389 to 403; sequence RLAKRRAQAHARKGG. Residues 406 to 418 are compositionally biased toward polar residues; the sequence is PTHSTVTASQGTP.

The protein belongs to the protein kinase superfamily. CAMK Ser/Thr protein kinase family. The cofactor is Mg(2+).

It carries out the reaction L-seryl-[protein] + ATP = O-phospho-L-seryl-[protein] + ADP + H(+). It catalyses the reaction L-threonyl-[protein] + ATP = O-phospho-L-threonyl-[protein] + ADP + H(+). May play a role in the response to environmental stress and cytokines. Appears to regulate translation by phosphorylating EIF4E, thus increasing the affinity of this protein for the 7-methylguanosine-containing mRNA cap. In Xenopus laevis (African clawed frog), this protein is MAP kinase-interacting serine/threonine-protein kinase 1 (mknk1).